The following is a 443-amino-acid chain: ATP-dependent protease ATPase subunit HslU (443 aa).

Residues Ile-18, 60 to 65, Asp-256, Glu-321, and Arg-393 contribute to the ATP site; that span reads GVGKTE.

It belongs to the ClpX chaperone family. HslU subfamily. As to quaternary structure, a double ring-shaped homohexamer of HslV is capped on each side by a ring-shaped HslU homohexamer. The assembly of the HslU/HslV complex is dependent on binding of ATP.

It is found in the cytoplasm. ATPase subunit of a proteasome-like degradation complex; this subunit has chaperone activity. The binding of ATP and its subsequent hydrolysis by HslU are essential for unfolding of protein substrates subsequently hydrolyzed by HslV. HslU recognizes the N-terminal part of its protein substrates and unfolds these before they are guided to HslV for hydrolysis. The sequence is that of ATP-dependent protease ATPase subunit HslU from Tolumonas auensis (strain DSM 9187 / NBRC 110442 / TA 4).